The chain runs to 569 residues: Dihydroxy-acid dehydratase (569 aa).

Cys-61 serves as a coordination point for [2Fe-2S] cluster. Asp-93 is a Mg(2+) binding site. Cys-134 contacts [2Fe-2S] cluster. The Mg(2+) site is built by Asp-135 and Lys-136. The residue at position 136 (Lys-136) is an N6-carboxylysine. Cys-211 lines the [2Fe-2S] cluster pocket. Glu-462 contacts Mg(2+). Ser-488 acts as the Proton acceptor in catalysis.

This sequence belongs to the IlvD/Edd family. As to quaternary structure, homodimer. It depends on [2Fe-2S] cluster as a cofactor. Requires Mg(2+) as cofactor.

It carries out the reaction (2R)-2,3-dihydroxy-3-methylbutanoate = 3-methyl-2-oxobutanoate + H2O. It catalyses the reaction (2R,3R)-2,3-dihydroxy-3-methylpentanoate = (S)-3-methyl-2-oxopentanoate + H2O. It participates in amino-acid biosynthesis; L-isoleucine biosynthesis; L-isoleucine from 2-oxobutanoate: step 3/4. It functions in the pathway amino-acid biosynthesis; L-valine biosynthesis; L-valine from pyruvate: step 3/4. Its function is as follows. Functions in the biosynthesis of branched-chain amino acids. Catalyzes the dehydration of (2R,3R)-2,3-dihydroxy-3-methylpentanoate (2,3-dihydroxy-3-methylvalerate) into 2-oxo-3-methylpentanoate (2-oxo-3-methylvalerate) and of (2R)-2,3-dihydroxy-3-methylbutanoate (2,3-dihydroxyisovalerate) into 2-oxo-3-methylbutanoate (2-oxoisovalerate), the penultimate precursor to L-isoleucine and L-valine, respectively. This Tropheryma whipplei (strain Twist) (Whipple's bacillus) protein is Dihydroxy-acid dehydratase.